The primary structure comprises 202 residues: ATP-dependent Clp protease proteolytic subunit (202 aa).

Ser-101 (nucleophile) is an active-site residue. Residue His-126 is part of the active site.

The protein belongs to the peptidase S14 family. In terms of assembly, component of the chloroplastic Clp protease core complex.

It localises to the plastid. The protein resides in the chloroplast stroma. The catalysed reaction is Hydrolysis of proteins to small peptides in the presence of ATP and magnesium. alpha-casein is the usual test substrate. In the absence of ATP, only oligopeptides shorter than five residues are hydrolyzed (such as succinyl-Leu-Tyr-|-NHMec, and Leu-Tyr-Leu-|-Tyr-Trp, in which cleavage of the -Tyr-|-Leu- and -Tyr-|-Trp bonds also occurs).. In terms of biological role, cleaves peptides in various proteins in a process that requires ATP hydrolysis. Has a chymotrypsin-like activity. Plays a major role in the degradation of misfolded proteins. This chain is ATP-dependent Clp protease proteolytic subunit, found in Drimys granadensis.